The sequence spans 1020 residues: LLGL scribble cell polarity complex component 2 (1020 aa).

14 WD repeats span residues 36–69 (SALG…FMGL), 76–117 (VTQV…IGRF), 132–169 (VTAV…ENNI), 193–227 (TLHE…VQHF), 233–264 (LESV…GEDP), 282–324 (AISK…KTHE), 332–364 (IIDF…VVDL), 386–462 (TCSH…YKLS), 506–581 (QKIH…FALV), 590–651 (TAIA…LRQS), 710–766 (VRTL…KEIQ), 775–827 (GLVV…VSSK), 832–884 (LTAV…VHYP), and 898–921 (VFTK…SLST). Positions 935-968 (LQMRSKSPSSPVHRDLPDGVPTEHRNFKGDSEGY) are disordered. Basic and acidic residues predominate over residues 946–965 (VHRDLPDGVPTEHRNFKGDS).

This sequence belongs to the WD repeat L(2)GL family. In terms of processing, phosphorylated.

It localises to the cytoplasm. The protein localises to the cytoskeleton. Essential for hemidesmosome formation and maintenance of the cytoskeleton elements as well as cellular morphology in the basal epidermis during development. Also involved in regulating growth of the basal epidermis. This is LLGL scribble cell polarity complex component 2 (llgl2) from Danio rerio (Zebrafish).